The sequence spans 110 residues: Large ribosomal subunit protein uL24 (110 aa).

The protein belongs to the universal ribosomal protein uL24 family. In terms of assembly, part of the 50S ribosomal subunit.

In terms of biological role, one of two assembly initiator proteins, it binds directly to the 5'-end of the 23S rRNA, where it nucleates assembly of the 50S subunit. One of the proteins that surrounds the polypeptide exit tunnel on the outside of the subunit. The chain is Large ribosomal subunit protein uL24 from Roseiflexus castenholzii (strain DSM 13941 / HLO8).